The primary structure comprises 79 residues: Small ribosomal subunit protein bS21 (79 aa).

Positions 58-79 are disordered; it reads ARKKMQREGLLPMKPKPMPGMR.

The protein belongs to the bacterial ribosomal protein bS21 family.

This chain is Small ribosomal subunit protein bS21, found in Beijerinckia indica subsp. indica (strain ATCC 9039 / DSM 1715 / NCIMB 8712).